The following is a 167-amino-acid chain: UPF0102 protein RB9115 (167 aa).

Belongs to the UPF0102 family.

The sequence is that of UPF0102 protein RB9115 from Rhodopirellula baltica (strain DSM 10527 / NCIMB 13988 / SH1).